Reading from the N-terminus, the 253-residue chain is Chitooligosaccharide deacetylase (253 aa).

The Mg(2+) site is built by His-61 and His-126.

This sequence belongs to the YdjC deacetylase family. ChbG subfamily. Homodimer. The cofactor is Mg(2+).

Its subcellular location is the cytoplasm. The catalysed reaction is N,N'-diacetylchitobiose + H2O = N-acetyl-beta-D-glucosaminyl-(1-&gt;4)-D-glucosamine + acetate. It carries out the reaction diacetylchitobiose-6'-phosphate + H2O = N'-monoacetylchitobiose-6'-phosphate + acetate. The protein operates within glycan degradation; chitin degradation. Its function is as follows. Involved in the degradation of chitin. ChbG is essential for growth on the acetylated chitooligosaccharides chitobiose and chitotriose but is dispensable for growth on cellobiose and chitosan dimer, the deacetylated form of chitobiose. Deacetylation of chitobiose-6-P and chitotriose-6-P is necessary for both the activation of the chb promoter by the regulatory protein ChbR and the hydrolysis of phosphorylated beta-glucosides by the phospho-beta-glucosidase ChbF. Catalyzes the removal of only one acetyl group from chitobiose-6-P to yield monoacetylchitobiose-6-P, the inducer of ChbR and the substrate of ChbF. This is Chitooligosaccharide deacetylase from Yersinia enterocolitica serotype O:8 / biotype 1B (strain NCTC 13174 / 8081).